The chain runs to 711 residues: DNA ligase (711 aa).

The disordered stretch occupies residues 1 to 29 (MSEDAIGQQVPAAQEAAAGAEPNSAARER). Low complexity predominate over residues 12–25 (AAQEAAAGAEPNSA). NAD(+)-binding positions include 54–58 (DAAFD), 103–104 (SL), and Glu-133. The N6-AMP-lysine intermediate role is filled by Lys-135. NAD(+)-binding residues include Arg-156, Glu-197, Lys-313, and Lys-337. The Zn(2+) site is built by Cys-431, Cys-434, Cys-450, and Cys-456. Residues 620 to 709 (QGPRPLEGVT…PEAARAVARV (90 aa)) form the BRCT domain.

Belongs to the NAD-dependent DNA ligase family. LigA subfamily. Requires Mg(2+) as cofactor. Mn(2+) is required as a cofactor.

It carries out the reaction NAD(+) + (deoxyribonucleotide)n-3'-hydroxyl + 5'-phospho-(deoxyribonucleotide)m = (deoxyribonucleotide)n+m + AMP + beta-nicotinamide D-nucleotide.. Its function is as follows. DNA ligase that catalyzes the formation of phosphodiester linkages between 5'-phosphoryl and 3'-hydroxyl groups in double-stranded DNA using NAD as a coenzyme and as the energy source for the reaction. It is essential for DNA replication and repair of damaged DNA. In Salinispora tropica (strain ATCC BAA-916 / DSM 44818 / JCM 13857 / NBRC 105044 / CNB-440), this protein is DNA ligase.